The chain runs to 63 residues: Large ribosomal subunit protein bL28 (63 aa).

The protein belongs to the bacterial ribosomal protein bL28 family.

The chain is Large ribosomal subunit protein bL28 from Dictyoglomus thermophilum (strain ATCC 35947 / DSM 3960 / H-6-12).